The primary structure comprises 85 residues: Neurotoxin beta-KTx 14.3 (85 aa).

The N-terminal stretch at Met-1–Ala-20 is a signal peptide. A propeptide spanning residues Gly-21–Gly-37 is cleaved from the precursor. Positions Glu-49–Lys-85 constitute a BetaSPN-type CS-alpha/beta domain. 3 disulfides stabilise this stretch: Cys-52–Cys-72, Cys-59–Cys-77, and Cys-63–Cys-79.

Belongs to the long chain scorpion toxin family. Class 2 subfamily. In terms of tissue distribution, expressed by the venom gland.

The protein localises to the secreted. Toxin with activity on voltage-gated potassium channels. Moderately and reversibly blocks up to 50% of the activity of Kv7.1/KCNQ1 (tested at 22 uM). 3D-structure modeling of the KCNQ1-toxin complex shows that the toxin interacts with the channel pore domain. Additionally, shows a very weak effect to block voltage-gated potassium channel Kv1.1/KCNA1. Functionally, has a very weak effect to block voltage-gated potassium channel Kv1.1/KCNA1. In Lychas mucronatus (Chinese swimming scorpion), this protein is Neurotoxin beta-KTx 14.3.